The following is a 1876-amino-acid chain: Phenolphthiocerol/phthiocerol polyketide synthase subunit A (1876 aa).

A Carrier 1 domain is found at 9-83; it reads ADLRHWLIDY…ALAAYLAAPE (75 aa). Ser-43 is subject to O-(pantetheine 4'-phosphoryl)serine. In terms of domain architecture, Ketosynthase family 3 (KS3) spans 101–526; the sequence is DEPIAVVGMG…GTNAHVVIEQ (426 aa). Active-site for beta-ketoacyl synthase activity residues include Cys-273, His-408, and His-448. The segment at 626 to 950 is acyltransferase; sequence SPGPGTVFVY…NLNKAHTIHP (325 aa). Residue Ser-720 is the For malonyltransferase activity of the active site. An N-terminal hotdog fold region spans residues 997 to 1112; that stretch reads HTTVATVSAS…AQLSSSPSDS (116 aa). Residues 997-1267 form the PKS/mFAS DH domain; sequence HTTVATVSAS…YRALDFGLDV (271 aa). His-1027 (proton acceptor; for dehydratase activity) is an active-site residue. The segment at 1102-1130 is disordered; it reads TAQLSSSPSDSASSLNEHHRANGQPPERA. Low complexity predominate over residues 1106 to 1115; it reads SSSPSDSASS. Residues 1130–1267 form a C-terminal hotdog fold region; it reads AHRDLIPDLA…YRALDFGLDV (138 aa). Catalysis depends on Asp-1186, which acts as the Proton donor; for dehydratase activity. 1491–1551 lines the NADP(+) pocket; sequence AAYLITGGLG…RRRIDAIRAL (61 aa). Residues 1491–1728 are beta-ketoacyl reductase; the sequence is AAYLITGGLG…DGYDVAQAVV (238 aa). One can recognise a Carrier 2 domain in the interval 1759–1836; that stretch reads EVRSELEQGL…SLASYLAKRV (78 aa). O-(pantetheine 4'-phosphoryl)serine is present on Ser-1796.

NADP(+) is required as a cofactor. Requires pantetheine 4'-phosphate as cofactor.

The catalysed reaction is icosanoyl-[(phenol)carboxyphthiodiolenone synthase] + 2 (S)-methylmalonyl-CoA + 3 malonyl-CoA + 5 NADPH + 10 H(+) = C32-carboxyphthiodiolenone-[(phenol)carboxyphthiodiolenone synthase] + 5 CO2 + 5 NADP(+) + 5 CoA + 2 H2O. It catalyses the reaction docosanoyl-[(phenol)carboxyphthiodiolenone synthase] + 2 (S)-methylmalonyl-CoA + 3 malonyl-CoA + 5 NADPH + 10 H(+) = C34-carboxyphthiodiolenone-[(phenol)carboxyphthiodiolenone synthase] + 5 CO2 + 5 NADP(+) + 5 CoA + 2 H2O. It carries out the reaction 17-(4-hydroxyphenyl)heptadecanoyl-[(phenol)carboxyphthiodiolenone synthase] + 2 (S)-methylmalonyl-CoA + 3 malonyl-CoA + 5 NADPH + 10 H(+) = C35-(phenol)carboxyphthiodiolenone-[(phenol)carboxyphthiodiolenone synthase] + 5 CO2 + 5 NADP(+) + 5 CoA + 2 H2O. The enzyme catalyses 19-(4-hydroxyphenyl)nonadecanoyl-[(phenol)carboxyphthiodiolenone synthase] + 2 (S)-methylmalonyl-CoA + 3 malonyl-CoA + 5 NADPH + 10 H(+) = C37-(phenol)carboxyphthiodiolenone-[(phenol)carboxyphthiodiolenone synthase] + 5 CO2 + 5 NADP(+) + 5 CoA + 2 H2O. It participates in lipid metabolism; fatty acid biosynthesis. Functionally, part of the PpsABCDE complex involved in the biosynthesis of the lipid core common to phthiocerols and phenolphthiocerols by successive additions of malonyl-CoA or methylmalonyl-CoA extender units. PpsA can accept as substrate the activated forms of either icosanoyl (C20), docosanoyl (C22) or lignoceroyl (C24) groups from FadD26, or a (4-hydroxyphenyl)-C17 or (4-hydroxyphenyl)-C19 fatty acyl from FadD29. PpsA initiates the biosynthesis and extends its substrate using a malonyl-CoA extender unit. The PpsB and PpsC proteins add the second and third malonyl-CoA extender units. PpsD adds an (R)-methylmalonyl unit and PpsE adds a second (R)-methylmalonyl unit. The incorporation of the methylmalonyl units results in formation of two branched methyl groups in the elongated product. The protein is Phenolphthiocerol/phthiocerol polyketide synthase subunit A (ppsA) of Mycobacterium tuberculosis (strain CDC 1551 / Oshkosh).